Consider the following 919-residue polypeptide: Isoleucine--tRNA ligase (919 aa).

The short motif at 57-67 is the 'HIGH' region element; the sequence is PYANGHTHIGH. Glu569 is a binding site for L-isoleucyl-5'-AMP. The short motif at 610-614 is the 'KMSKS' region element; that stretch reads KMSKS. Residue Lys613 coordinates ATP. 4 residues coordinate Zn(2+): Cys895, Cys898, Cys910, and Cys913.

This sequence belongs to the class-I aminoacyl-tRNA synthetase family. IleS type 1 subfamily. As to quaternary structure, monomer. Zn(2+) is required as a cofactor.

It localises to the cytoplasm. The catalysed reaction is tRNA(Ile) + L-isoleucine + ATP = L-isoleucyl-tRNA(Ile) + AMP + diphosphate. Functionally, catalyzes the attachment of isoleucine to tRNA(Ile). As IleRS can inadvertently accommodate and process structurally similar amino acids such as valine, to avoid such errors it has two additional distinct tRNA(Ile)-dependent editing activities. One activity is designated as 'pretransfer' editing and involves the hydrolysis of activated Val-AMP. The other activity is designated 'posttransfer' editing and involves deacylation of mischarged Val-tRNA(Ile). In Sulfurimonas denitrificans (strain ATCC 33889 / DSM 1251) (Thiomicrospira denitrificans (strain ATCC 33889 / DSM 1251)), this protein is Isoleucine--tRNA ligase.